We begin with the raw amino-acid sequence, 430 residues long: MANVVVVGAQWGDEGKGKVVDIYTEHADDVVRYQGGNNAGHTLVVNGEKTVLHLIPSGILHKGKRCIIGNGVVLDPEVFIMEINRLKEKGRLQDDSALLVSESVHIIMPYHKQIDLAREAKSGDKKIGTTGRGIGPTYEDKIGRRGIRLMDLLDPEIFARKLRENLEEKNFILEKLLGEKPLSFDEIHKTYSGYADILRKYVANTSLILCKDIAAGKKLLFEGAQGTLLDVDHGTYPFVTSSSTCAGGACTGTGVGPRDIHEIIGISKAYVTRVGSGPFPTELLDADGEQLRQTGGEFGATTGRPRRCGWFDAMVVRFAVRVNGLTGVALTKLDVLNDFDTIKICTGYTYEGKPVEDLPANLAVFEKCQPVYEEMPGWKSDIRGVRRFEDLPEKARLYVHRLQELISCPIVLVSIGPGRDETITIRNPFA.

GTP-binding positions include 12-18 and 40-42; these read GDEGKGK and GHT. Asp-13 serves as the catalytic Proton acceptor. 2 residues coordinate Mg(2+): Asp-13 and Gly-40. IMP is bound by residues 13–16, 38–41, Thr-130, Arg-144, Gln-225, Thr-240, and Arg-304; these read DEGK and NAGH. His-41 serves as the catalytic Proton donor. 300–306 provides a ligand contact to substrate; sequence ATTGRPR. GTP-binding positions include Arg-306, 332 to 334, and 414 to 416; these read KLD and SIG.

It belongs to the adenylosuccinate synthetase family. As to quaternary structure, homodimer. Mg(2+) serves as cofactor.

It localises to the cytoplasm. The catalysed reaction is IMP + L-aspartate + GTP = N(6)-(1,2-dicarboxyethyl)-AMP + GDP + phosphate + 2 H(+). It functions in the pathway purine metabolism; AMP biosynthesis via de novo pathway; AMP from IMP: step 1/2. Functionally, plays an important role in the de novo pathway of purine nucleotide biosynthesis. Catalyzes the first committed step in the biosynthesis of AMP from IMP. The protein is Adenylosuccinate synthetase of Geobacter metallireducens (strain ATCC 53774 / DSM 7210 / GS-15).